A 320-amino-acid chain; its full sequence is Ferrochelatase (320 aa).

Residues H194 and E275 each coordinate Fe cation.

It belongs to the ferrochelatase family.

It localises to the cytoplasm. The catalysed reaction is heme b + 2 H(+) = protoporphyrin IX + Fe(2+). The protein operates within porphyrin-containing compound metabolism; protoheme biosynthesis; protoheme from protoporphyrin-IX: step 1/1. In terms of biological role, catalyzes the ferrous insertion into protoporphyrin IX. This Klebsiella pneumoniae (strain 342) protein is Ferrochelatase.